A 132-amino-acid polypeptide reads, in one-letter code: Small ribosomal subunit protein uS11 (132 aa).

The protein belongs to the universal ribosomal protein uS11 family. In terms of assembly, part of the 30S ribosomal subunit. Interacts with proteins S7 and S18. Binds to IF-3.

Its function is as follows. Located on the platform of the 30S subunit, it bridges several disparate RNA helices of the 16S rRNA. Forms part of the Shine-Dalgarno cleft in the 70S ribosome. This Clostridium kluyveri (strain NBRC 12016) protein is Small ribosomal subunit protein uS11.